A 513-amino-acid polypeptide reads, in one-letter code: 2,3-bisphosphoglycerate-independent phosphoglycerate mutase (513 aa).

Mn(2+)-binding residues include Asp-12 and Ser-62. Ser-62 functions as the Phosphoserine intermediate in the catalytic mechanism. Substrate contacts are provided by residues His-123, 153–154 (RD), Arg-185, Arg-191, 261–264 (RSDR), and Lys-335. Residues Asp-402, His-406, Asp-443, His-444, and His-462 each contribute to the Mn(2+) site.

The protein belongs to the BPG-independent phosphoglycerate mutase family. As to quaternary structure, monomer. Requires Mn(2+) as cofactor.

The enzyme catalyses (2R)-2-phosphoglycerate = (2R)-3-phosphoglycerate. The protein operates within carbohydrate degradation; glycolysis; pyruvate from D-glyceraldehyde 3-phosphate: step 3/5. Functionally, catalyzes the interconversion of 2-phosphoglycerate and 3-phosphoglycerate. The sequence is that of 2,3-bisphosphoglycerate-independent phosphoglycerate mutase from Thiobacillus denitrificans (strain ATCC 25259 / T1).